Here is a 264-residue protein sequence, read N- to C-terminus: MSVSVNIENLTKEYRIYRNNKDRIKDALIPKNKNKTFYALDNVSLTAHEGDVIGLVGINGSGKSTLSNMIGGSISPSSGEITRHGDVSVIAINAGLNGQLTGVENIEFKMLCMGFKRKEIKKLMPEIIEFSELGEFIYQPVKKYSSGMRAKLGFSINITVNPDILVIDEALSVGDQTFTQKCLDKIYEFKAAKKTIFFVSHNIRQVREFCTKIAWIEGGKLKEFGELEEVLPDYEAFLKTFKKKSKAEQKEFRNKLDESRFVVK.

The ABC transporter domain occupies 24–243; the sequence is IKDALIPKNK…YEAFLKTFKK (220 aa). An ATP-binding site is contributed by 57–64; that stretch reads GINGSGKS.

The protein belongs to the ABC transporter superfamily. Teichoic acids exporter (TC 3.A.1.104.1) family. As to quaternary structure, the complex is composed of two ATP-binding proteins (TagH) and two transmembrane proteins (TagG).

It localises to the cell membrane. It catalyses the reaction ATP + H2O + teichoic acidSide 1 = ADP + phosphate + teichoic acidSide 2.. In terms of biological role, part of the ABC transporter complex TagGH involved in teichoic acids export. Responsible for energy coupling to the transport system. This is Teichoic acids export ATP-binding protein TagH from Staphylococcus epidermidis (strain ATCC 35984 / DSM 28319 / BCRC 17069 / CCUG 31568 / BM 3577 / RP62A).